The sequence spans 94 residues: ESAT-6-like protein EsxN (94 aa).

It belongs to the WXG100 family. ESAT-6 subfamily.

Its subcellular location is the secreted. In Mycobacterium bovis (strain ATCC BAA-935 / AF2122/97), this protein is ESAT-6-like protein EsxN.